The following is a 449-amino-acid chain: Phosphoglucosamine mutase (449 aa).

The active-site Phosphoserine intermediate is the Ser-101. Mg(2+)-binding residues include Ser-101, Asp-240, Asp-242, and Asp-244. Phosphoserine is present on Ser-101.

It belongs to the phosphohexose mutase family. It depends on Mg(2+) as a cofactor. Activated by phosphorylation.

The enzyme catalyses alpha-D-glucosamine 1-phosphate = D-glucosamine 6-phosphate. Catalyzes the conversion of glucosamine-6-phosphate to glucosamine-1-phosphate. This is Phosphoglucosamine mutase from Streptococcus mutans serotype c (strain ATCC 700610 / UA159).